The chain runs to 684 residues: Acetophenone carboxylase delta subunit (684 aa).

This sequence belongs to the oxoprolinase family. In terms of assembly, acetophenone carboxylase consists of five subunits; a heterooctameric subcomplex of two alpha (Apc1), two beta (Apc2), two gamma (Apc3) and two delta (Apc4) subunits assembles with the epsilon (Apc5) subunit in an unknown stoichiometry. The cofactor is Mg(2+). Mn(2+) is required as a cofactor.

The protein resides in the cytoplasm. The enzyme catalyses acetophenone + hydrogencarbonate + 2 ATP + H2O = 3-oxo-3-phenylpropanoate + 2 ADP + 2 phosphate + 2 H(+). Its activity is regulated as follows. Inhibited by zinc ions, carbamoylphosphate and beta,gamma-imido-ATP. Its function is as follows. Catalyzes the carboxylation of acetophenone to form 3-oxo-3-phenylpropanoate (benzoylacetate) in the anaerobic catabolism of ethylbenzene. Also carboxylates propiophenone at the same rate and 4-acetyl-pyridine at lower rates. This chain is Acetophenone carboxylase delta subunit (apc4), found in Aromatoleum aromaticum (strain DSM 19018 / LMG 30748 / EbN1) (Azoarcus sp. (strain EbN1)).